The sequence spans 613 residues: Dihydroxy-acid dehydratase (613 aa).

D81 provides a ligand contact to Mg(2+). Position 122 (C122) interacts with [2Fe-2S] cluster. The Mg(2+) site is built by D123 and K124. Position 124 is an N6-carboxylysine (K124). A [2Fe-2S] cluster-binding site is contributed by C195. Mg(2+) is bound at residue E491. The active-site Proton acceptor is the S517.

Belongs to the IlvD/Edd family. Homodimer. Requires [2Fe-2S] cluster as cofactor. It depends on Mg(2+) as a cofactor.

The enzyme catalyses (2R)-2,3-dihydroxy-3-methylbutanoate = 3-methyl-2-oxobutanoate + H2O. It carries out the reaction (2R,3R)-2,3-dihydroxy-3-methylpentanoate = (S)-3-methyl-2-oxopentanoate + H2O. It functions in the pathway amino-acid biosynthesis; L-isoleucine biosynthesis; L-isoleucine from 2-oxobutanoate: step 3/4. The protein operates within amino-acid biosynthesis; L-valine biosynthesis; L-valine from pyruvate: step 3/4. Its function is as follows. Functions in the biosynthesis of branched-chain amino acids. Catalyzes the dehydration of (2R,3R)-2,3-dihydroxy-3-methylpentanoate (2,3-dihydroxy-3-methylvalerate) into 2-oxo-3-methylpentanoate (2-oxo-3-methylvalerate) and of (2R)-2,3-dihydroxy-3-methylbutanoate (2,3-dihydroxyisovalerate) into 2-oxo-3-methylbutanoate (2-oxoisovalerate), the penultimate precursor to L-isoleucine and L-valine, respectively. The polypeptide is Dihydroxy-acid dehydratase (Buchnera aphidicola subsp. Schlechtendalia chinensis).